Consider the following 305-residue polypeptide: Guanine nucleotide-binding protein subunit beta (305 aa).

WD repeat units lie at residues 19-49 (NKLG…LVWD), 61-91 (APSV…VVYD), 104-133 (GHAG…MFWD), 145-176 (GHEM…KLWD), 188-218 (GNTS…RCFD), 231-260 (PSSS…EVWD), and 272-302 (GHEN…RLWS).

Belongs to the WD repeat G protein beta family. G proteins are composed of 3 units, alpha, beta and gamma. Binding of the beta-gamma subunit complex (git5-git11) to the alpha subunit (gpa2) facilitates interaction with GPCR git3.

Its subcellular location is the cell membrane. It localises to the cytoplasm. It is found in the nucleus. Functionally, beta subunit of the heterotrimeric guanine nucleotide-binding protein (G protein) involved in glucose-induced cAMP signaling. The beta-gamma subunits (git5-git11) promote binding of the alpha subunit gpa2 to GPCR git3, which senses extracellular glucose, to activate cAMP-PKA signaling and repress sexual development and gluconeogenesis. The polypeptide is Guanine nucleotide-binding protein subunit beta (git5) (Schizosaccharomyces pombe (strain 972 / ATCC 24843) (Fission yeast)).